A 127-amino-acid chain; its full sequence is Fluoride-specific ion channel FluC (127 aa).

Helical transmembrane passes span 4 to 24, 35 to 55, 71 to 91, and 103 to 123; these read TLLAVFIGGGVGSVARWQLGV, LGTLLANLIGAFVIGGALAFF, TGLCGGLTTFSTFSAEVVMFL, and VLLNLAGSLLMTALAFALVTW. 2 residues coordinate Na(+): Gly-75 and Thr-78.

Belongs to the fluoride channel Fluc/FEX (TC 1.A.43) family.

The protein resides in the cell inner membrane. It catalyses the reaction fluoride(in) = fluoride(out). With respect to regulation, na(+) is not transported, but it plays an essential structural role and its presence is essential for fluoride channel function. In terms of biological role, fluoride-specific ion channel. Important for reducing fluoride concentration in the cell, thus reducing its toxicity. The protein is Fluoride-specific ion channel FluC of Pectobacterium atrosepticum (strain SCRI 1043 / ATCC BAA-672) (Erwinia carotovora subsp. atroseptica).